The sequence spans 413 residues: MNAKRIRGLLIFAAVIAIAVLIWRHFTQTSPAAPGTSEQHAARTSHSGNNSSGNGGGRRAAMRTLAPVQAAVTQSASVPYYLSGLGTVTSANTVTLRSRVNGQLMALHFQEGQQVKAGDLLAEIDPRPFQVELTQAQGQLAKDRAVLANAQQDLARYQQLVKTNLISRQELDAQTAAVRQAEGTLKADEGAVASAQLQLDYSKITAPISGRIGLKQVDVGNYITSGDTNGIVVITQTYPIDVVFTVPEAEISTILNAQKSGQPPMVEAWDRANQKKLSQGTLLSMDNQIDATTGTIKLKARFDNLDDALFPNQFVNIRMKVDTLKNAVVAPSAAVQMGNEGRFVWILNDKNEVSKRQVTTSIQYGQLVVVTAGLDADVKVVTDGIDRLTEGAKVEVVPSALTEKTPAIAGEKS.

Positions 1–32 (MNAKRIRGLLIFAAVIAIAVLIWRHFTQTSPA) are cleaved as a signal peptide. Positions 32-46 (AAPGTSEQHAARTSH) are enriched in polar residues. Residues 32 to 59 (AAPGTSEQHAARTSHSGNNSSGNGGGRR) form a disordered region.

Belongs to the membrane fusion protein (MFP) (TC 8.A.1) family. As to quaternary structure, part of a tripartite efflux system composed of MdtA, MdtB and MdtC.

The protein resides in the cell inner membrane. This Pectobacterium carotovorum subsp. carotovorum (strain PC1) protein is Multidrug resistance protein MdtA.